Here is a 324-residue protein sequence, read N- to C-terminus: Meiotic recombination protein DLH1 (324 aa).

112–119 (GEFRCGKT) is an ATP binding site. A dsDNA-binding site is contributed by R214. SsDNA contacts are provided by R214, Y217, R220, R226, and R296. Residues R220 and R226 each coordinate dsDNA.

This sequence belongs to the RecA family. DMC1 subfamily. Double stacked ring-shaped homooctamer.

The protein resides in the nucleus. Its function is as follows. Required for meiotic recombination, synaptonemal complex formation and cell cycle progression. In Candida albicans (Yeast), this protein is Meiotic recombination protein DLH1 (DLH1).